A 476-amino-acid polypeptide reads, in one-letter code: Lactate utilization protein B (476 aa).

4Fe-4S ferredoxin-type domains are found at residues 304 to 334 and 353 to 382; these read GTEFQPVLQCIRCAACVNVCPVYRHIGGHSY and YDDYKELPYASSLCAACTEACPVKIPLHEL. 7 residues coordinate [4Fe-4S] cluster: Cys-313, Cys-316, Cys-319, Cys-323, Cys-366, Cys-369, and Cys-373. A disordered region spans residues 440–476; that stretch reads KGPGPLKAWTESREFPAPSKERFRDWFQTRQKGGNPS. Over residues 449 to 466 the composition is skewed to basic and acidic residues; sequence TESREFPAPSKERFRDWF. Over residues 467-476 the composition is skewed to polar residues; it reads QTRQKGGNPS.

It belongs to the LutB/YkgF family.

Functionally, is involved in L-lactate degradation and allows cells to grow with lactate as the sole carbon source. Has probably a role as an electron transporter during oxidation of L-lactate. In Geobacillus kaustophilus (strain HTA426), this protein is Lactate utilization protein B.